Reading from the N-terminus, the 157-residue chain is Biotin carboxyl carrier protein of acetyl-CoA carboxylase (157 aa).

Positions 80–156 (YATIVSPMVG…DCGQALMKVE (77 aa)) constitute a Biotinyl-binding domain. Position 122 is an N6-biotinyllysine (Lys122).

The protein resides in the plastid. Its subcellular location is the chloroplast. Its pathway is lipid metabolism; fatty acid biosynthesis. Functionally, this protein is a component of the acetyl coenzyme A carboxylase complex; first, biotin carboxylase catalyzes the carboxylation of the carrier protein and then the transcarboxylase transfers the carboxyl group to form malonyl-CoA. This chain is Biotin carboxyl carrier protein of acetyl-CoA carboxylase (accB), found in Porphyra purpurea (Red seaweed).